The following is a 396-amino-acid chain: Tyrosine--tRNA ligase (396 aa).

The short motif at 42-51 is the 'HIGH' region element; the sequence is PTAPDIHLGH. The short motif at 226-230 is the 'KMSKS' region element; the sequence is KMSKS. ATP is bound at residue K229. An S4 RNA-binding domain is found at 334-395; sequence LPIANLLKEA…GKRKFAKIII (62 aa).

It belongs to the class-I aminoacyl-tRNA synthetase family. TyrS type 2 subfamily. As to quaternary structure, homodimer.

The protein localises to the cytoplasm. It catalyses the reaction tRNA(Tyr) + L-tyrosine + ATP = L-tyrosyl-tRNA(Tyr) + AMP + diphosphate + H(+). Catalyzes the attachment of tyrosine to tRNA(Tyr) in a two-step reaction: tyrosine is first activated by ATP to form Tyr-AMP and then transferred to the acceptor end of tRNA(Tyr). The chain is Tyrosine--tRNA ligase from Francisella tularensis subsp. tularensis (strain SCHU S4 / Schu 4).